The sequence spans 275 residues: Polyamine aminopropyltransferase (275 aa).

In terms of domain architecture, PABS spans 2–235 (DLWLREGQIE…GFWSFTIGSK (234 aa)). Gln-31 contacts S-methyl-5'-thioadenosine. Spermidine contacts are provided by His-62 and Asp-86. S-methyl-5'-thioadenosine contacts are provided by residues Glu-106 and 137-138 (DG). Asp-155 serves as the catalytic Proton acceptor. 155–158 (DSTD) is a spermidine binding site.

It belongs to the spermidine/spermine synthase family. In terms of assembly, homodimer or homotetramer.

The protein resides in the cytoplasm. It carries out the reaction S-adenosyl 3-(methylsulfanyl)propylamine + putrescine = S-methyl-5'-thioadenosine + spermidine + H(+). The protein operates within amine and polyamine biosynthesis; spermidine biosynthesis; spermidine from putrescine: step 1/1. Catalyzes the irreversible transfer of a propylamine group from the amino donor S-adenosylmethioninamine (decarboxy-AdoMet) to putrescine (1,4-diaminobutane) to yield spermidine. This chain is Polyamine aminopropyltransferase, found in Clostridium kluyveri (strain NBRC 12016).